Here is a 431-residue protein sequence, read N- to C-terminus: MSTSSSALSQLKNSPLAGNINYEPTVWSRADALKVNENDPTTTQPLVSADFPVMSDTVFIWDTMPLRELDGTVVSVNGWSVILTLTADRHPDDPQYLDANGRYDIKRDWEDRHGRARMCYWYSRTGKDWIFGGRVMAEGVSPTTREWAGTPILLNDKGDIDLYYTCVTPGAAIAKVRGRIVTSDQGVELKDFTQVKKLFEADGTYYQTEAQNSSWNFRDPSPFIDPNDGKLYMVFEGNVAGERGSHTVGAAELGPVPPGHEDVGGARFQVGCIGLAVAKDLSGEEWEILPPLVTAVGVNDQTERPHYIFQDGKYYLFTISHKFTYAEGLEGPDGVYGFVGEHLFGPYRPMNASGLVLGNPPEQPFQTYSHCVMPNGLVTSFIDSVPTDGEDYRIGGTEAPTVRIVLKGDRSFVQEEYDYGYIPAMKDVQLS.

Sucrose-binding residues include Trp-61, Asp-62, Ala-148, Arg-218, and Asp-219. Catalysis depends on Asp-62, which acts as the Nucleophile. Residue Glu-303 is the Proton donor/acceptor of the active site.

Belongs to the glycosyl hydrolase 68 family. In terms of assembly, homodimer.

It carries out the reaction [6)-beta-D-fructofuranosyl-(2-&gt;](n) alpha-D-glucopyranoside + sucrose = [6)-beta-D-fructofuranosyl-(2-&gt;](n+1) alpha-D-glucopyranoside + D-glucose. Sucrose hydrolase activity is negatively affected by salt concentration. The levan polymerization rate is constant regardless of sucrose concentration. In terms of biological role, catalyzes the synthesis of levan, a fructose polymer, by transferring the fructosyl moiety from sucrose to a growing acceptor molecule. Also displays sucrose hydrolase activity. This chain is Levansucrase Lscbeta, found in Pseudomonas syringae pv. actinidiae.